The primary structure comprises 418 residues: Actin-like protein 7B (418 aa).

The segment at 1–42 (MATKNSPSPKPMGTAQGDPGEAGTLPAPEAAGIRDTGSTQLK) is disordered. The residue at position 8 (Ser-8) is a Phosphoserine.

Belongs to the actin family. As to expression, testis specific.

The protein resides in the cytoplasm. The protein localises to the cytoskeleton. The sequence is that of Actin-like protein 7B (Actl7b) from Mus musculus (Mouse).